Consider the following 783-residue polypeptide: MSQIPVADLTEAQAVEDLERLADLLATHDIAYHQEDNPTVSDAEYDALKRRNLDIETRFPHLVRDNSPSMRVGATRAEQFAPVEHGVPMLSLDNAFSNDEAIEFDARVRRFLRISPSETVAYTAEPKIDGLSASLRYEKGVLVQGATRGDGRVGEDVTANLRTIADIPHRLKGSGWPDVIEVRGEVYVELAAFAAFNKAAEEAGQRTYANPRNFAAGSLRQIDPKISAQRPLRFFGYAWGLVSEGFADSQWGALERLAEWGFVTTAPPAQRVLNAQGLLDIYAQFEVLRPTLGFDIDGVVYKVDDLELQRRLGFVSRSPRWAIARKFPAQRARTVLEAIDLQVGRTGAITPVARLKPVTVGGVSVTNATLHNGDEIARLDVRVGDTVVIQRAGDVIPQIVEVALDARPDPAPPPYEFPHVCPCPLQTPLAREVTASGQESVVRRCTGEFACPFQRVEHLRHFVSRRAFDIEGLGEKQLQAFFEEGWITEPADIFKLARDAEKLAVLREREGYGETSVANLVKGIEARRTIGMDRMIYGLGARDIGETTSTVLARNFDRFEDLQAAAEAAARALPGETYLELSTAPGVGPKALDMLVEAGKGGVVADPWPQTDDLELKIGHAVPKLTKPARAALAQRYGTWDAFADGLVAAASGAPGDDYLHLAAIDGVGPVAAQSLARFFAEDHNRQKVANLVAELDIQPVAKPKTDTAVAGKTIVFTGSLEKMTRDEAKAQAEGLGAKVASSVSKKTDLVVAGPGAGSKLKTATDLGIQVMTEDEWLELVAG.

NAD(+) is bound by residues 42–46 (DAEYD), 91–92 (SL), and glutamate 125. Lysine 127 (N6-AMP-lysine intermediate) is an active-site residue. NAD(+) is bound by residues arginine 148, glutamate 185, lysine 302, and lysine 326. Cysteine 421, cysteine 423, cysteine 445, and cysteine 451 together coordinate Zn(2+). The region spanning 705–783 (KTDTAVAGKT…EDEWLELVAG (79 aa)) is the BRCT domain.

Belongs to the NAD-dependent DNA ligase family. LigA subfamily. Mg(2+) is required as a cofactor. The cofactor is Mn(2+).

The catalysed reaction is NAD(+) + (deoxyribonucleotide)n-3'-hydroxyl + 5'-phospho-(deoxyribonucleotide)m = (deoxyribonucleotide)n+m + AMP + beta-nicotinamide D-nucleotide.. Functionally, DNA ligase that catalyzes the formation of phosphodiester linkages between 5'-phosphoryl and 3'-hydroxyl groups in double-stranded DNA using NAD as a coenzyme and as the energy source for the reaction. It is essential for DNA replication and repair of damaged DNA. The protein is DNA ligase of Caulobacter vibrioides (strain ATCC 19089 / CIP 103742 / CB 15) (Caulobacter crescentus).